Here is a 163-residue protein sequence, read N- to C-terminus: Nucleotide-binding protein Npun_R4736 (163 aa).

It belongs to the YajQ family.

Its function is as follows. Nucleotide-binding protein. This is Nucleotide-binding protein Npun_R4736 from Nostoc punctiforme (strain ATCC 29133 / PCC 73102).